We begin with the raw amino-acid sequence, 734 residues long: MTCICIFSIAFLLSFHLTTAQRSTGLQTYIVHVDKPDAQVLANSADLESYYNSFLPATVSGSEVPSRIIHSYHHVATGFAAKLSGEEVKEMEKKAGFVSAKLEKVLTLHTTHTPNFLGLYQNMGFWQESNYGKGVIIGLLDTGITPGHPSFSDVNMPSPPAKWKGKCEFTGNATCNKKIIGARNFISGSGVPPTDEEGHGTHTASTAAGNFVNDANVFGNANGTAVGMAPLAHIAMYKVCSEDGCSDADILAALDAAIDDGVDVLSLSLGGYSDPFYYDNIAIGAFAAIRKGIFVSASAGNDGPLNSTLSNEAPWILTVGASTHDRKIVATAVLGNGQQYDGESAFQPADFPHTLLPLVYPGTSDEEAAFCSSGSLDKFDVKGKVVVCDRGGDVARLEKSQTVKDAGGAAMILANLEIDGEGTFADAHVLPATHVGYAAGEMIKSYINSTSTPTAGILFKGTIIGFKSSPSVSSFSSRGPNLASPGIVKPDIIGPGVNILAAWPVSVENKTGTDLTFNIISGTSMSCPHLSGIVALLKSAHPDWSPAAIKSAIMTSADQSNLEGQPILDERNLPADIFATGAGHVNPSKASDPGLIYDIQLEDYIQYLCGLGYREKDIGLIVQETVKCESSISEAELNYPSFSIILGPKTQNYTRTVTNVGDASSTYTVNIAKTQGVDIVVEPATLVFTKMYQQATYTVSFTQSGDFTDRFVQGAISWSSNEYVVRSPISVKLE.

Positions 1–20 (MTCICIFSIAFLLSFHLTTA) are cleaved as a signal peptide. In terms of domain architecture, Inhibitor I9 spans 28–109 (TYIVHVDKPD…AKLEKVLTLH (82 aa)). A Peptidase S8 domain is found at 114–591 (PNFLGLYQNM…AGHVNPSKAS (478 aa)). The active-site Charge relay system is aspartate 141. N-linked (GlcNAc...) asparagine glycosylation is present at asparagine 172. The active-site Charge relay system is the histidine 199. Asparagine 222 and asparagine 306 each carry an N-linked (GlcNAc...) asparagine glycan. Residues 357–442 (PLVYPGTSDE…THVGYAAGEM (86 aa)) enclose the PA domain. Residues asparagine 448 and asparagine 509 are each glycosylated (N-linked (GlcNAc...) asparagine). Serine 524 serves as the catalytic Charge relay system. Asparagine 652 carries N-linked (GlcNAc...) asparagine glycosylation.

This sequence belongs to the peptidase S8 family.

The protein resides in the secreted. The protein localises to the extracellular space. Its subcellular location is the apoplast. Required for arbuscular mycorrhiza (AM) development during AM symbiosis with AM fungi (e.g. Glomeromycota intraradices). The sequence is that of Subtilisin-like protease from Petunia hybrida (Petunia).